The sequence spans 264 residues: Thymidylate synthase (264 aa).

Arginine 21 contacts dUMP. Position 51 (histidine 51) interacts with (6R)-5,10-methylene-5,6,7,8-tetrahydrofolate. 126–127 (RR) contributes to the dUMP binding site. Catalysis depends on cysteine 146, which acts as the Nucleophile. Residues 166-169 (RSAD), asparagine 177, and 207-209 (HIY) each bind dUMP. Residue aspartate 169 participates in (6R)-5,10-methylene-5,6,7,8-tetrahydrofolate binding. Residue serine 263 coordinates (6R)-5,10-methylene-5,6,7,8-tetrahydrofolate.

Belongs to the thymidylate synthase family. Bacterial-type ThyA subfamily. In terms of assembly, homodimer.

Its subcellular location is the cytoplasm. It catalyses the reaction dUMP + (6R)-5,10-methylene-5,6,7,8-tetrahydrofolate = 7,8-dihydrofolate + dTMP. It participates in pyrimidine metabolism; dTTP biosynthesis. In terms of biological role, catalyzes the reductive methylation of 2'-deoxyuridine-5'-monophosphate (dUMP) to 2'-deoxythymidine-5'-monophosphate (dTMP) while utilizing 5,10-methylenetetrahydrofolate (mTHF) as the methyl donor and reductant in the reaction, yielding dihydrofolate (DHF) as a by-product. This enzymatic reaction provides an intracellular de novo source of dTMP, an essential precursor for DNA biosynthesis. The protein is Thymidylate synthase of Bacillus pumilus (strain SAFR-032).